The following is a 540-amino-acid chain: Chaperonin GroEL (540 aa).

ATP contacts are provided by residues 29-32, 86-90, glycine 413, 476-478, and aspartate 492; these read TLGP, DGTTT, and NAA.

The protein belongs to the chaperonin (HSP60) family. Forms a cylinder of 14 subunits composed of two heptameric rings stacked back-to-back. Interacts with the co-chaperonin GroES.

The protein localises to the cytoplasm. It carries out the reaction ATP + H2O + a folded polypeptide = ADP + phosphate + an unfolded polypeptide.. Its function is as follows. Together with its co-chaperonin GroES, plays an essential role in assisting protein folding. The GroEL-GroES system forms a nano-cage that allows encapsulation of the non-native substrate proteins and provides a physical environment optimized to promote and accelerate protein folding. The sequence is that of Chaperonin GroEL from Geobacillus thermodenitrificans (strain NG80-2).